Here is a 71-residue protein sequence, read N- to C-terminus: Plasticin-C1 (71 aa).

The first 22 residues, 1-22 (MAFLKKSLLLVLFLGLVSLSIC), serve as a signal peptide directing secretion. A propeptide spanning residues 23–45 (EEEKRENEDEEKQEDDDQSENKR) is cleaved from the precursor. The disordered stretch occupies residues 25–46 (EKRENEDEEKQEDDDQSENKRG). The segment covering 30–40 (EDEEKQEDDDQ) has biased composition (acidic residues). The residue at position 68 (asparagine 68) is an Asparagine amide. Positions 70 to 71 (ES) are excised as a propeptide.

Belongs to the frog skin active peptide (FSAP) family. Plasticin subfamily. As to expression, expressed by the skin glands.

Its subcellular location is the secreted. The protein resides in the target cell membrane. Its function is as follows. Neutral peptide with no antimicrobial activity. May act in synergy with cationic peptides by enhancing their activity. Has a moderate hemolytic activity. This chain is Plasticin-C1, found in Agalychnis callidryas (Red-eyed tree frog).